Here is a 321-residue protein sequence, read N- to C-terminus: Ribose-phosphate pyrophosphokinase (321 aa).

Residues 44–46 (DGE) and 103–104 (RQ) each bind ATP. Mg(2+) is bound by residues His137 and Asp179. Residue Lys202 is part of the active site. Residues Arg204, Asp228, and 232–236 (DTAGT) contribute to the D-ribose 5-phosphate site.

It belongs to the ribose-phosphate pyrophosphokinase family. Class I subfamily. Homohexamer. Mg(2+) serves as cofactor.

It localises to the cytoplasm. It carries out the reaction D-ribose 5-phosphate + ATP = 5-phospho-alpha-D-ribose 1-diphosphate + AMP + H(+). It participates in metabolic intermediate biosynthesis; 5-phospho-alpha-D-ribose 1-diphosphate biosynthesis; 5-phospho-alpha-D-ribose 1-diphosphate from D-ribose 5-phosphate (route I): step 1/1. Involved in the biosynthesis of the central metabolite phospho-alpha-D-ribosyl-1-pyrophosphate (PRPP) via the transfer of pyrophosphoryl group from ATP to 1-hydroxyl of ribose-5-phosphate (Rib-5-P). The protein is Ribose-phosphate pyrophosphokinase of Staphylococcus aureus (strain Mu50 / ATCC 700699).